The primary structure comprises 566 residues: Transmembrane protein 151B (566 aa).

Low complexity predominate over residues 1 to 11 (MSPPGSAAGES). Residues 1 to 25 (MSPPGSAAGESAAGGGGGGGGPGVS) form a disordered region. Residues 12 to 23 (AAGGGGGGGGPG) show a composition bias toward gly residues. 2 helical membrane passes run 65-85 (CLLL…CHVT) and 112-132 (YVYI…VECW). Positions 495–512 (VNEASCPTEQTRLSSQAS) are enriched in polar residues. Positions 495-529 (VNEASCPTEQTRLSSQASMGDDEDDDEEEAGPPPP) are disordered. Residues 514–524 (GDDEDDDEEEA) show a composition bias toward acidic residues.

Belongs to the TMEM151 family.

Its subcellular location is the membrane. The protein is Transmembrane protein 151B (TMEM151B) of Homo sapiens (Human).